Here is a 318-residue protein sequence, read N- to C-terminus: Taste receptor type 2 member 14 (318 aa).

Residues 1-7 (MGGVIKN) are Extracellular-facing. The chain crosses the membrane as a helical span at residues 8-28 (ISTFVLIVEFIIGNLGNSFIA). The Cytoplasmic segment spans residues 29–55 (LVNCIDWVKRRKISLVDQLLTALAISR). Residues 56–76 (ISLVWLIFGSWCVSAFFPALF) traverse the membrane as a helical segment. Residues 77–87 (ATEKMFRMLTN) lie on the Extracellular side of the membrane. 2 residues coordinate cholesterol: T86 and W89. The helical transmembrane segment at 88 to 108 (IWAVTNHFSVWLATGLGTFYF) threads the bilayer. Residues 109-129 (LKIANFSNSIFIYLKWRVKKV) are Cytoplasmic-facing. A helical membrane pass occupies residues 130–150 (VLVLLLVTSVFLFLNIALINI). At 151–184 (HINASINGYGGNKTCSSDSNDFTRFSSLIALTSS) the chain is on the extracellular side. N-linked (GlcNAc...) asparagine glycosylation is found at N153 and N162. Cholesterol is bound at residue A180. The chain crosses the membrane as a helical span at residues 185 to 205 (VFIFIPFILSLAIFLLLTFSL). Topologically, residues 206–232 (WKHCKKMQHTVKASGDASTKAHRGVMQ) are cytoplasmic. The chain crosses the membrane as a helical span at residues 233 to 253 (TVIAFLLLYPIFSLSFFIAVW). Topologically, residues 254-261 (TSGWLEEN) are extracellular. A helical transmembrane segment spans residues 262–282 (LIILSQVMGMAYPSCHSCILI). L265 and V268 together coordinate cholesterol. Residues 283–317 (LGNKKLRQASLSVLWWLKYRFKDGEPSGHKGFRES) lie on the Cytoplasmic side of the membrane.

This sequence belongs to the G-protein coupled receptor T2R family. Core component of the TAS2R14-GNAI1 complex, consisting of TAS2R14, GNAI1, GNB1 and GNG2; within the complex interacts with GNAI1. Core component of the TAS2R14-GNAT3 complex, consisting of TAS2R14, GNAT3, GNB1 and GNG2; within the complex interacts with GNAT3. Core component of the TAS2R14-GNAS2 complex, consisting of TAS2R14, GNAS2, GNB1 and GNG2; within the complex interacts with GNAS2.

It is found in the membrane. It catalyses the reaction Ca(2+)(in) = Ca(2+)(out). The enzyme catalyses 3',5'-cyclic AMP(in) = 3',5'-cyclic AMP(out). Its activity is regulated as follows. Basal activity is enhanced by binding to bitter tastants, such as flufenamic acid and aristolochic acid. Regulated by cholesterol in a concentration-dependent manner. Functionally, gustducin-linked G-protein coupled receptor that plays a role in the perception of bitterness. The activity of this receptor stimulates GNAT3, activating the gustducin G-protein pathway. Likely plays a role in sensing the chemical composition of the gastrointestinal content and other extra-oral tissues via the inhibitory G-protein pathways. The sequence is that of Taste receptor type 2 member 14 (TAS2R14) from Pongo pygmaeus (Bornean orangutan).